The primary structure comprises 372 residues: MIFPRKCQSTQRDLWNIFKLWGWTMLCCDFLAHHGTDCWTYHYSENPMNWQKARRFCRENYTDLVAIQNKAEIEYLEKTLPFSPSYYWIGIRKIGGIWTWVGTNKSLTQEAENWGDGEPNNKKNKEDCVEIYIKRKKDAGKWNDDACHKPKAALCYTASCQPWSCSGHGECVEIINNYTCNCDVGYYGPQCQFVIQCEPLEPPKLGTMDCTHPLGDFSFSSQCAFNCSEGTNLTGIEETTCGPFGNWSSPEPTCQVIQCEPLSAPDLGIMNCSHPLASFSFSSACTFSCSEGTELIGEKKTICESSGIWSNPNPICQKLDRSFSMIKEGDYNPLFIPVAVIVTAFSGLAFIIWLARRLKKGKKSKKSMDDPY.

An N-terminal signal peptide occupies residues 1–28; that stretch reads MIFPRKCQSTQRDLWNIFKLWGWTMLCC. A propeptide spanning residues 29-38 is cleaved from the precursor; it reads DFLAHHGTDC. Residues 39 to 332 are Extracellular-facing; it reads WTYHYSENPM…FSMIKEGDYN (294 aa). The C-type lectin domain maps to 55 to 155; that stretch reads RFCRENYTDL…ACHKPKAALC (101 aa). Cystine bridges form between cysteine 57-cysteine 155, cysteine 128-cysteine 147, cysteine 128-cysteine 160, cysteine 160-cysteine 171, cysteine 165-cysteine 180, cysteine 182-cysteine 191, cysteine 197-cysteine 241, cysteine 227-cysteine 254, cysteine 259-cysteine 303, and cysteine 289-cysteine 316. Residues asparagine 60 and asparagine 104 are each glycosylated (N-linked (GlcNAc...) asparagine). Ca(2+) is bound by residues glutamate 118, asparagine 120, glutamate 126, asparagine 143, and aspartate 144. The region spanning 156–192 is the EGF-like domain; the sequence is YTASCQPWSCSGHGECVEIINNYTCNCDVGYYGPQCQ. Residue asparagine 177 is glycosylated (N-linked (GlcNAc...) asparagine). Sushi domains are found at residues 195–256 and 257–318; these read IQCE…TCQV and IQCE…ICQK. 4 N-linked (GlcNAc...) asparagine glycosylation sites follow: asparagine 226, asparagine 232, asparagine 246, and asparagine 271. The chain crosses the membrane as a helical span at residues 333–355; the sequence is PLFIPVAVIVTAFSGLAFIIWLA. The Cytoplasmic portion of the chain corresponds to 356-372; sequence RRLKKGKKSKKSMDDPY.

It belongs to the selectin/LECAM family. As to quaternary structure, interaction with SELPLG/PSGL1 and PODXL2 is required for promoting recruitment and rolling of leukocytes. This interaction is dependent on the sialyl Lewis X glycan modification of SELPLG and PODXL2, and tyrosine sulfation modifications of SELPLG. Sulfation on 'Tyr-51' of SELPLG is important for L-selectin binding. In terms of processing, N-glycosylated.

It localises to the cell membrane. Calcium-dependent lectin that mediates cell adhesion by binding to glycoproteins on neighboring cells. Mediates the adherence of lymphocytes to endothelial cells of high endothelial venules in peripheral lymph nodes. Promotes initial tethering and rolling of leukocytes in endothelia. In Papio hamadryas (Hamadryas baboon), this protein is L-selectin (SELL).